A 160-amino-acid chain; its full sequence is UPF0262 protein Mmar10_1128 (160 aa).

It belongs to the UPF0262 family.

The protein is UPF0262 protein Mmar10_1128 of Maricaulis maris (strain MCS10) (Caulobacter maris).